Reading from the N-terminus, the 986-residue chain is Zinc finger protein 445 (986 aa).

In terms of domain architecture, SCAN box spans 52–134 (RQLFRQLRYH…ALLEELQRDL (83 aa)). Residues 219-289 (LTFQDVEVTF…NICTVQLKRD (71 aa)) form the KRAB domain. Glycyl lysine isopeptide (Lys-Gly) (interchain with G-Cter in SUMO2) cross-links involve residues K302, K360, and K385. The segment at 433–460 (QNTGLKENGKDRYGETSRKSWHAHPEHR) is disordered. Positions 439 to 460 (ENGKDRYGETSRKSWHAHPEHR) are enriched in basic and acidic residues. 2 C2H2-type zinc fingers span residues 470–492 (FQCRVCGKAFKWRSNRIRHEKIH) and 498–520 (YQCSLCEKAFQRLSSYRLHQKTH). Residue K524 forms a Glycyl lysine isopeptide (Lys-Gly) (interchain with G-Cter in SUMO2) linkage. 2 consecutive C2H2-type zinc fingers follow at residues 553–575 (LHCNQCGKNFSCKSYAIEHQRIH) and 581–604 (YKCTRCRKTFRWKSNFSRHMKLHH). Residue K609 forms a Glycyl lysine isopeptide (Lys-Gly) (interchain with G-Cter in SUMO2) linkage. 2 consecutive C2H2-type zinc fingers follow at residues 634–656 (FPCQNCGKTFTQKKSLIEHQRIH) and 662–686 (YQCSGCGETFTYRSSYIIHMKRTQH). K691 is covalently cross-linked (Glycyl lysine isopeptide (Lys-Gly) (interchain with G-Cter in SUMO2)). 4 C2H2-type zinc fingers span residues 718 to 740 (NKCKYCGKAFHNRSFLLIHERVH), 746 to 768 (YQCRECEKAFRWSSNLYRHQRKH), 796 to 818 (FWCQECGKTFTRKRSLLDHKGIH), and 824 to 846 (FKCNLCEKSFDRNYRLVNHQRIH). K929 participates in a covalent cross-link: Glycyl lysine isopeptide (Lys-Gly) (interchain with G-Cter in SUMO2). 2 consecutive C2H2-type zinc fingers follow at residues 933-955 (HKCSTCGKTFKKHSHLISHKRCH) and 961-983 (FKCIVCGKTFRWSSNLTRHMKNH).

This sequence belongs to the krueppel C2H2-type zinc-finger protein family.

It localises to the nucleus. Functionally, transcription regulator required to maintain maternal and paternal gene imprinting, a process by which gene expression is restricted in a parent of origin-specific manner by epigenetic modification of genomic DNA and chromatin, including DNA methylation. Acts by controlling DNA methylation during the earliest multicellular stages of development at multiple imprinting control regions (ICRs). Acts together with ZFP57, but ZFP57 plays the predominant role in imprinting maintenance. In contrast, ZNF445 seems to be the major factor in human early embryonic imprinting maintenance. The chain is Zinc finger protein 445 (Znf445) from Mus musculus (Mouse).